The primary structure comprises 531 residues: O-phosphoserine--tRNA(Cys) ligase (531 aa).

Substrate contacts are provided by residues 189-191 (HMT), 234-236 (SAS), 276-277 (YY), and Asn319.

The protein belongs to the class-II aminoacyl-tRNA synthetase family. O-phosphoseryl-tRNA(Cys) synthetase subfamily. In terms of assembly, homotetramer. Interacts with SepCysS.

It carries out the reaction tRNA(Cys) + O-phospho-L-serine + ATP = O-phospho-L-seryl-tRNA(Cys) + AMP + diphosphate. Catalyzes the attachment of O-phosphoserine (Sep) to tRNA(Cys). In Methanospirillum hungatei JF-1 (strain ATCC 27890 / DSM 864 / NBRC 100397 / JF-1), this protein is O-phosphoserine--tRNA(Cys) ligase.